Consider the following 341-residue polypeptide: SGVAKFAKYPLTFGPSPISNLNRLSQHLGSKVNVYAKREDCNSGLAFGGNKLRKLEYIVPDIVEGDYTHLVSIGGRQSNQTRMVAALAAKLGKKCVLIQEDWVPIPEAEKDVYNRVGNIELSRIMGADVRVIEDGFDIGMRKSFANALQELEDAGHKPYPIPAGCSEHKYGGLGFVGFADEVINQEVELGIKFDKIVVCCVTGSTTAGILAGMAQYGRQDDVIAIDASFTSEKTKEQTLRIANNTAKLIGVEHEFKDFTLDTRFAYPCYGVPNEGTIEAIRTCAEQEGVLTDPVYEGKSMQGLIALIKEDYFKPGANVLYVHLGGAPALSAYSSFFPTKTA.

Ser1 carries the N-acetylserine modification. Position 51 is an N6-(pyridoxal phosphate)lysine (Lys51). Ser78 serves as the catalytic Nucleophile.

Belongs to the ACC deaminase/D-cysteine desulfhydrase family. As to quaternary structure, homodimer. Pyridoxal 5'-phosphate serves as cofactor.

The enzyme catalyses 1-aminocyclopropane-1-carboxylate + H2O = 2-oxobutanoate + NH4(+). Catalyzes a cyclopropane ring-opening reaction, the irreversible conversion of 1-aminocyclopropane-1-carboxylate (ACC) to ammonia and alpha-ketobutyrate. This is 1-aminocyclopropane-1-carboxylate deaminase from Cyberlindnera saturnus (Yeast).